Consider the following 402-residue polypeptide: Phosphoglycerate kinase (402 aa).

Residues 29–31 (DFN), arginine 45, 69–72 (HLGR), arginine 125, and arginine 158 contribute to the substrate site. ATP-binding positions include lysine 209, glutamate 331, and 357–360 (GGDT).

Belongs to the phosphoglycerate kinase family.

It localises to the cytoplasm. It catalyses the reaction (2R)-3-phosphoglycerate + ATP = (2R)-3-phospho-glyceroyl phosphate + ADP. Its pathway is carbohydrate degradation; glycolysis; pyruvate from D-glyceraldehyde 3-phosphate: step 2/5. The protein is Phosphoglycerate kinase (pgk) of Helicobacter pylori (strain ATCC 700392 / 26695) (Campylobacter pylori).